We begin with the raw amino-acid sequence, 742 residues long: MATKFPSFNQGLAQDPTTRRIWYGIATAHDFESHDGMTEEKLYQKLFSTHFGHLAIIALWVAGNLFHVAWQGNFEQFVLDPTHVRPIAHAIWDPHFGEGITEAMTQAGANGPVNIAYSGLYHWWYTIGMRTNEQLFQASIFMSILACWVLFAGWLHLQPKFRPTLAWFKNAEAQLNHHLSVLFGFSSIAWTGHLVHVAIPESRGQHVGWDNWLTVLPHPAGLAPFFTLNWGAYAQNPDSLDQVFGTAEGAGTAIFTFLGGLHPQSEALWLTDIAHHHIAIGCVFVIAGHMYRNTFGIGHSLKEITEAHNTRHPNDPHKGSFGISHDGIYETVNNSLHFQLGLALASLGVATSLVAQHMGALPSYAFIARDYTTQSALYTHHQYIAMFLMVGAFAHGAIFFVRDYDPEVNKDNVLARVLGTKEALISHLSWVTMLLGFHTLGIYVHNDVVVAFGNPEKQILIEPVFAQFVQAAQGKMMYGFDALLSDPTSSATIAANSMPGNHYWMDLINRQDALSSFLPIGPADFLVHHAIALGLHTTALILIKGALDARGTKLIPDKKDLGYAFPCDGPGRGGTCDSSSWDAMYLAMFWALNLIAWVTFYWHWKHLTIWQGNMAQFNESGTYLMGWFRDYLWLNSSQLINGYNPFGVNSLSPWAWMFLFGHLVWATGFMFLISWRGYWQELIETLVWAHQRTPIANLVGWRDKPVALSIVQARLVGLAHFTIGNILTFGAFVIASTSGKFG.

8 consecutive transmembrane segments (helical) span residues 46 to 69 (LFST…FHVA), 135 to 158 (LFQA…LHLQ), 175 to 199 (LNHH…HVAI), 273 to 291 (IAHH…GHMY), 336 to 359 (LHFQ…QHMG), 375 to 401 (SALY…IFFV), 423 to 445 (ALIS…IYVH), and 525 to 543 (FLVH…LILI). [4Fe-4S] cluster-binding residues include Cys-567 and Cys-576. 2 helical membrane-spanning segments follow: residues 583-604 (AMYL…YWHW) and 651-673 (LSPW…MFLI). Divinyl chlorophyll a is bound by residues His-662, Met-670, and Tyr-678. Trp-679 is a phylloquinone binding site. The chain crosses the membrane as a helical span at residues 715–735 (LVGLAHFTIGNILTFGAFVIA).

This sequence belongs to the PsaA/PsaB family. The PsaA/B heterodimer binds the P700 divinyl chlorophyll special pair and subsequent electron acceptors. PSI consists of a core antenna complex that captures photons, and an electron transfer chain that converts photonic excitation into a charge separation. The cyanobacterial PSI reaction center is composed of one copy each of PsaA,B,C,D,E,F,I,J,K,L,M and X, and forms trimeric complexes. Requires PSI electron transfer chain: 5 divinyl chlorophyll a, 1 divinyl chlorophyll a', 2 phylloquinones and 3 4Fe-4S clusters. PSI core antenna: 90 divinyl chlorophyll a, 22 carotenoids, 3 phospholipids and 1 galactolipid. P700 is a divinyl chlorophyll a/divinyl chlorophyll a' dimer, A0 is one or more divinyl chlorophyll a, A1 is one or both phylloquinones and FX is a shared 4Fe-4S iron-sulfur center. as cofactor.

The protein resides in the cellular thylakoid membrane. The enzyme catalyses reduced [plastocyanin] + hnu + oxidized [2Fe-2S]-[ferredoxin] = oxidized [plastocyanin] + reduced [2Fe-2S]-[ferredoxin]. PsaA and PsaB bind P700, the primary electron donor of photosystem I (PSI), as well as the electron acceptors A0, A1 and FX. PSI is a plastocyanin/cytochrome c6-ferredoxin oxidoreductase, converting photonic excitation into a charge separation, which transfers an electron from the donor P700 chlorophyll pair to the spectroscopically characterized acceptors A0, A1, FX, FA and FB in turn. Oxidized P700 is reduced on the lumenal side of the thylakoid membrane by plastocyanin or cytochrome c6. This is Photosystem I P700 chlorophyll a apoprotein A2 from Prochlorococcus marinus (strain MIT 9312).